Here is a 437-residue protein sequence, read N- to C-terminus: UDP-N-acetylmuramoylalanine--D-glutamate ligase (437 aa).

115–121 (GSNGKST) lines the ATP pocket.

Belongs to the MurCDEF family.

It localises to the cytoplasm. It carries out the reaction UDP-N-acetyl-alpha-D-muramoyl-L-alanine + D-glutamate + ATP = UDP-N-acetyl-alpha-D-muramoyl-L-alanyl-D-glutamate + ADP + phosphate + H(+). The protein operates within cell wall biogenesis; peptidoglycan biosynthesis. Its function is as follows. Cell wall formation. Catalyzes the addition of glutamate to the nucleotide precursor UDP-N-acetylmuramoyl-L-alanine (UMA). This is UDP-N-acetylmuramoylalanine--D-glutamate ligase from Vibrio campbellii (strain ATCC BAA-1116).